A 1328-amino-acid chain; its full sequence is Tubulin polyglutamylase TTLL5 (1328 aa).

The interval 1-22 (MPVVMARDLEETASSSEDEDLA) is disordered. Positions 62-407 (RYHLSYKIVR…VCQDPAQRTS (346 aa)) constitute a TTL domain. ATP is bound by residues lysine 180, 186-187 (RG), 208-211 (SRYI), and 221-223 (KFD). Residue arginine 186 participates in a protein binding. Residue arginine 247 participates in L-glutamate binding. 268–269 (TN) serves as a coordination point for ATP. L-glutamate-binding residues include tyrosine 270, serine 271, and lysine 293. Mg(2+)-binding residues include aspartate 353, glutamate 366, and asparagine 368. The c-MTBD region stretch occupies residues 378-488 (PLDLKIKASM…RGGFIRIFPT (111 aa)). Lysine 384 contacts L-glutamate. Disordered regions lie at residues 411-436 (IYPSFESSRRNPFQKPQRTRPLSASD), 585-631 (AQPA…QAKY), 834-853 (HSKSSKNSSSYSDSGAKGDH), 948-975 (PALLLSPVPDNAPPSIHSGTQNVSPAGL), 1006-1032 (SSAKAAGSCHPHKHHSGIAKTQKEGED), 1085-1129 (RSSA…LQTG), and 1212-1271 (RISS…QLNG). Over residues 420-432 (RNPFQKPQRTRPL) the composition is skewed to polar residues. Residues 597-617 (ESEEEEEVGLDNDDEEQEASQ) show a composition bias toward acidic residues. The segment covering 838–847 (SKNSSSYSDS) has biased composition (low complexity). Polar residues-rich tracts occupy residues 1116 to 1128 (THSSPPGSRSLQT), 1214 to 1227 (SSATTGGQKPNTLP), 1234 to 1248 (PNSSTLVSKPASNHK), and 1257 to 1271 (QRASKGSSAEGQLNG).

This sequence belongs to the tubulin--tyrosine ligase family. In terms of assembly, interacts with the transcriptional coactivators NCOA1/SRC-1 and NCOA2/TIF2. Mg(2+) is required as a cofactor. Highly expressed in brain, kidney, liver, spleen and testis. Expressed in heart, lung, muscle and trachea.

The protein resides in the cell projection. The protein localises to the cilium. Its subcellular location is the cytoplasm. It is found in the cytoskeleton. It localises to the cilium basal body. The protein resides in the nucleus. The enzyme catalyses L-glutamyl-[protein] + L-glutamate + ATP = gamma-L-glutamyl-L-glutamyl-[protein] + ADP + phosphate + H(+). The catalysed reaction is (L-glutamyl)(n)-gamma-L-glutamyl-L-glutamyl-[protein] + L-glutamate + ATP = (L-glutamyl)(n+1)-gamma-L-glutamyl-L-glutamyl-[protein] + ADP + phosphate + H(+). Polyglutamylase which modifies tubulin, generating polyglutamate side chains on the gamma-carboxyl group of specific glutamate residues within the C-terminal tail of tubulin. Preferentially mediates ATP-dependent initiation step of the polyglutamylation reaction over the elongation step. Preferentially modifies the alpha-tubulin tail over a beta-tail. Required for CCSAP localization to both polyglutamylated spindle and cilia microtubules. Increases the effects of transcriptional coactivator NCOA2/TIF2 in glucocorticoid receptor-mediated repression and induction and in androgen receptor-mediated induction. The protein is Tubulin polyglutamylase TTLL5 of Mus musculus (Mouse).